The chain runs to 673 residues: Polyadenylate-binding protein, cytoplasmic and nuclear (673 aa).

The tract at residues 1–39 (MSAETATSPAPAAETPVAPAPATQTTPAEGAPTPAAAAP) is disordered. RRM domains follow at residues 46–124 (ASLY…WSQR), 134–211 (GNIF…HHVG), 227–304 (TNVY…RAQT), and 330–407 (VNLY…LAQR). The disordered stretch occupies residues 300-322 (GRAQTKSEREAELKKSHEEKRLE). Over residues 304-322 (TKSEREAELKKSHEEKRLE) the composition is skewed to basic and acidic residues. Disordered stretches follow at residues 509–572 (APGY…AGRL) and 644–673 (WGKD…EKKE). A PABC domain is found at 569–646 (AGRLDAQSLA…ALRVLAEWGK (78 aa)).

Belongs to the polyadenylate-binding protein type-1 family.

It is found in the cytoplasm. Its subcellular location is the nucleus. Functionally, binds the poly(A) tail of mRNA. Appears to be an important mediator of the multiple roles of the poly(A) tail in mRNA biogenesis, stability and translation. In the nucleus, involved in both mRNA cleavage and polyadenylation. Is also required for efficient mRNA export to the cytoplasm. Acts in concert with a poly(A)-specific nuclease (PAN) to affect poly(A) tail shortening, which may occur concomitantly with either nucleocytoplasmic mRNA transport or translational initiation. In the cytoplasm, stimulates translation initiation and regulates mRNA decay through translation termination-coupled poly(A) shortening, probably mediated by PAN. The sequence is that of Polyadenylate-binding protein, cytoplasmic and nuclear (PAB1) from Cryptococcus neoformans var. neoformans serotype D (strain B-3501A) (Filobasidiella neoformans).